We begin with the raw amino-acid sequence, 168 residues long: Protein-export protein SecB (168 aa).

Belongs to the SecB family. In terms of assembly, homotetramer, a dimer of dimers. One homotetramer interacts with 1 SecA dimer.

Its subcellular location is the cytoplasm. One of the proteins required for the normal export of preproteins out of the cell cytoplasm. It is a molecular chaperone that binds to a subset of precursor proteins, maintaining them in a translocation-competent state. It also specifically binds to its receptor SecA. The protein is Protein-export protein SecB of Haemophilus influenzae (strain PittGG).